The sequence spans 128 residues: Aspartate 1-decarboxylase (128 aa).

Ser-25 functions as the Schiff-base intermediate with substrate; via pyruvic acid in the catalytic mechanism. Ser-25 carries the pyruvic acid (Ser) modification. Substrate is bound at residue Thr-57. Tyr-58 serves as the catalytic Proton donor. Residue 73 to 75 coordinates substrate; sequence GSA.

It belongs to the PanD family. In terms of assembly, heterooctamer of four alpha and four beta subunits. Requires pyruvate as cofactor. Post-translationally, is synthesized initially as an inactive proenzyme, which is activated by self-cleavage at a specific serine bond to produce a beta-subunit with a hydroxyl group at its C-terminus and an alpha-subunit with a pyruvoyl group at its N-terminus.

Its subcellular location is the cytoplasm. It carries out the reaction L-aspartate + H(+) = beta-alanine + CO2. The protein operates within cofactor biosynthesis; (R)-pantothenate biosynthesis; beta-alanine from L-aspartate: step 1/1. Functionally, catalyzes the pyruvoyl-dependent decarboxylation of aspartate to produce beta-alanine. This Burkholderia cenocepacia (strain HI2424) protein is Aspartate 1-decarboxylase.